Here is a 151-residue protein sequence, read N- to C-terminus: 3-hydroxyacyl-[acyl-carrier-protein] dehydratase FabZ (151 aa).

H52 is an active-site residue.

This sequence belongs to the thioester dehydratase family. FabZ subfamily.

The protein resides in the cytoplasm. The enzyme catalyses a (3R)-hydroxyacyl-[ACP] = a (2E)-enoyl-[ACP] + H2O. Involved in unsaturated fatty acids biosynthesis. Catalyzes the dehydration of short chain beta-hydroxyacyl-ACPs and long chain saturated and unsaturated beta-hydroxyacyl-ACPs. The sequence is that of 3-hydroxyacyl-[acyl-carrier-protein] dehydratase FabZ (fabZ1) from Lactococcus lactis subsp. lactis (strain IL1403) (Streptococcus lactis).